We begin with the raw amino-acid sequence, 206 residues long: 2-phospho-L-lactate guanylyltransferase (206 aa).

The protein belongs to the CofC family. Homodimer.

The enzyme catalyses (2S)-2-phospholactate + GTP + H(+) = (2S)-lactyl-2-diphospho-5'-guanosine + diphosphate. It participates in cofactor biosynthesis; coenzyme F420 biosynthesis. In terms of biological role, guanylyltransferase that catalyzes the activation of (2S)-2-phospholactate (2-PL) as (2S)-lactyl-2-diphospho-5'-guanosine, via the condensation of 2-PL with GTP. It is involved in the biosynthesis of coenzyme F420, a hydride carrier cofactor. The chain is 2-phospho-L-lactate guanylyltransferase from Archaeoglobus profundus (strain DSM 5631 / JCM 9629 / NBRC 100127 / Av18).